A 189-amino-acid chain; its full sequence is Putative manganese efflux pump MntP (189 aa).

The next 6 helical transmembrane spans lie at 3–23, 41–61, 65–85, 106–128, 141–161, and 168–188; these read PVSLIFLAFAMSTDAFAAAIG, IIFGVIEAITPLVGWLLGQAA, VADWDHWIAFVLLVLLGLHMI, WILAVTALATSIDALAVGVGLAF, GLATMTMVTLGTMLGRALGAV, and MVGGVVLILVGATILYEHLSA.

This sequence belongs to the MntP (TC 9.B.29) family.

It is found in the cell inner membrane. Functionally, probably functions as a manganese efflux pump. The protein is Putative manganese efflux pump MntP of Pseudomonas aeruginosa (strain LESB58).